Consider the following 551-residue polypeptide: Eukaryotic translation initiation factor 3 subunit D-2 (551 aa).

Residues 91-154 (TKPYQRGRYR…RNTQNMGRRF (64 aa)) form a disordered region. Residues 95–113 (QRGRYRPNMRNNVRSRGRT) are compositionally biased toward basic residues. Over residues 121-136 (ASLGGSTAGGATASTT) the composition is skewed to low complexity. The interval 290–304 (QFDLLTVNETSVEPP) is RNA gate. Positions 527–551 (PENAFDSDGDEEEESSDPLSNSNDN) are disordered. The span at 531–542 (FDSDGDEEEESS) shows a compositional bias: acidic residues.

The protein belongs to the eIF-3 subunit D family. Component of the eukaryotic translation initiation factor 3 (eIF-3) complex. The eIF-3 complex interacts with pix.

The protein localises to the cytoplasm. Its function is as follows. mRNA cap-binding component of the eukaryotic translation initiation factor 3 (eIF-3) complex, which is involved in protein synthesis of a specialized repertoire of mRNAs and, together with other initiation factors, stimulates binding of mRNA and methionyl-tRNAi to the 40S ribosome. The eIF-3 complex specifically targets and initiates translation of a subset of mRNAs involved in cell proliferation. In the eIF-3 complex, eif3d specifically recognizes and binds the 7-methylguanosine cap of a subset of mRNAs. The protein is Eukaryotic translation initiation factor 3 subunit D-2 of Drosophila melanogaster (Fruit fly).